The sequence spans 317 residues: Probable F-box protein At2g36090 (317 aa).

The F-box domain occupies 25–74; it reads IESHILTRLDGATLASVSCASSHLHHLASNEILWSKICRSTWPSCSGGSR.

The polypeptide is Probable F-box protein At2g36090 (Arabidopsis thaliana (Mouse-ear cress)).